The sequence spans 195 residues: Rubrerythrin (195 aa).

A Ferritin-like diiron domain is found at 1–150 (MKSLKGTKTA…KLAKNIEEGK (150 aa)). Positions 20, 53, 98, 101, 132, 135, 162, 165, 178, and 181 each coordinate Fe(3+). Positions 157–195 (VVLWKCGNCGFIWEGAEAPLKCPACLHPQAYFEVFKETY) constitute a Rubredoxin-like domain.

As to quaternary structure, homodimer. Possesses two rubredoxin-like centers and two non-sulfur oxo-bridged di-iron centers per dimer. Fe(3+) is required as a cofactor.

It localises to the cytoplasm. May provide oxidative stress protection via catalytic reduction of intracellular hydrogen peroxide. The sequence is that of Rubrerythrin (rbr) from Clostridium perfringens (strain 13 / Type A).